The following is a 432-amino-acid chain: 3-phosphoshikimate 1-carboxyvinyltransferase (432 aa).

3-phosphoshikimate contacts are provided by lysine 23, serine 24, and arginine 28. Position 23 (lysine 23) interacts with phosphoenolpyruvate. Positions 95 and 123 each coordinate phosphoenolpyruvate. The 3-phosphoshikimate site is built by serine 167, glutamine 169, aspartate 317, and lysine 344. Glutamine 169 lines the phosphoenolpyruvate pocket. Aspartate 317 acts as the Proton acceptor in catalysis. Residues arginine 348 and arginine 390 each coordinate phosphoenolpyruvate.

This sequence belongs to the EPSP synthase family. In terms of assembly, monomer.

The protein resides in the cytoplasm. It catalyses the reaction 3-phosphoshikimate + phosphoenolpyruvate = 5-O-(1-carboxyvinyl)-3-phosphoshikimate + phosphate. The protein operates within metabolic intermediate biosynthesis; chorismate biosynthesis; chorismate from D-erythrose 4-phosphate and phosphoenolpyruvate: step 6/7. Its function is as follows. Catalyzes the transfer of the enolpyruvyl moiety of phosphoenolpyruvate (PEP) to the 5-hydroxyl of shikimate-3-phosphate (S3P) to produce enolpyruvyl shikimate-3-phosphate and inorganic phosphate. This Staphylococcus carnosus (strain TM300) protein is 3-phosphoshikimate 1-carboxyvinyltransferase.